We begin with the raw amino-acid sequence, 111 residues long: Rho GDP-dissociation inhibitor 1 (111 aa).

Residues Lys57 and Lys60 each participate in a glycyl lysine isopeptide (Lys-Gly) (interchain with G-Cter in SUMO1); alternate cross-link. Glycyl lysine isopeptide (Lys-Gly) (interchain with G-Cter in SUMO2); alternate cross-links involve residues Lys57 and Lys60. An N6-acetyllysine; alternate modification is found at Lys60. Lys60 carries the N6-succinyllysine; alternate modification.

Belongs to the Rho GDI family. Monomer. Interacts with FER. Interacts with PLXNB3. Forms a heterodimer with RAC1. Interacts with RHOA, the affinity is increased by three orders of magnitude when RHOA is prenylated. Interacts with PSMD10; the interaction increases ARHGDIA association with RHOA, leading to ARHGDIA-mediated inactivation of RHOA and ROCK and prolonged AKT activation. Interacts with KANK2; the interaction is direct and may regulate the interaction of ARHGDIA with RHOA, RAC1 and CDC42. Interacts with RHOC. Interacts with CDC42. Interacts with NGFR (via death domain); NGFR binding decreases the affinity for RHOA. Post-translationally, the N-terminus is blocked.

The protein localises to the cytoplasm. Functionally, controls Rho proteins homeostasis. Regulates the GDP/GTP exchange reaction of the Rho proteins by inhibiting the dissociation of GDP from them, and the subsequent binding of GTP to them. Retains Rho proteins such as CDC42, RAC1 and RHOA in an inactive cytosolic pool, regulating their stability and protecting them from degradation. Actively involved in the recycling and distribution of activated Rho GTPases in the cell, mediates extraction from membranes of both inactive and activated molecules due its exceptionally high affinity for prenylated forms. Through the modulation of Rho proteins, may play a role in cell motility regulation. In glioma cells, inhibits cell migration and invasion by mediating the signals of SEMA5A and PLXNB3 that lead to inactivation of RAC1. The sequence is that of Rho GDP-dissociation inhibitor 1 (ARHGDIA) from Cavia porcellus (Guinea pig).